We begin with the raw amino-acid sequence, 319 residues long: Annexin A4 (319 aa).

A2 is modified (N-acetylalanine). Position 7 is a phosphothreonine (T7). Phosphoserine is present on S12. Annexin repeat units lie at residues 14-85, 86-157, 169-241, and 245-316; these read FSAT…GMIT, PTVL…SLSA, ALMR…AIVK, and NKSA…ILCG. N6-acetyllysine is present on residues K213, K293, and K300.

Belongs to the annexin family. Expressed in pancreas (at protein level). Also detected in liver, spleen, intestine, stomach, kidney, and adrenal glands.

It is found in the zymogen granule membrane. Functionally, calcium/phospholipid-binding protein which promotes membrane fusion and is involved in exocytosis. In Canis lupus familiaris (Dog), this protein is Annexin A4 (ANXA4).